The chain runs to 111 residues: UPF0060 membrane protein Krad_3114 (111 aa).

Helical transmembrane passes span 7 to 27 (IALFVLAALLEIGGAWLVWQG), 33 to 53 (GLAWIGAGVIALGLYGFAATL), 62 to 82 (VLAAYGGVFVAGSLLWAAVVD), and 88 to 108 (RFDVAGALVCLVGVGIVMYAP).

This sequence belongs to the UPF0060 family.

The protein resides in the cell membrane. The protein is UPF0060 membrane protein Krad_3114 of Kineococcus radiotolerans (strain ATCC BAA-149 / DSM 14245 / SRS30216).